The following is a 402-amino-acid chain: Dual-specificity RNA methyltransferase RlmN (402 aa).

Residue Glu-124 is the Proton acceptor of the active site. The region spanning 130–370 (DADRGTLCVS…APVRTPRGRD (241 aa)) is the Radical SAM core domain. Cys-137 and Cys-375 are joined by a disulfide. The [4Fe-4S] cluster site is built by Cys-144, Cys-148, and Cys-151. S-adenosyl-L-methionine-binding positions include 199-200 (GE), Ser-231, 253-255 (SLH), and Asn-332. The active-site S-methylcysteine intermediate is the Cys-375.

It belongs to the radical SAM superfamily. RlmN family. The cofactor is [4Fe-4S] cluster.

It is found in the cytoplasm. The catalysed reaction is adenosine(2503) in 23S rRNA + 2 reduced [2Fe-2S]-[ferredoxin] + 2 S-adenosyl-L-methionine = 2-methyladenosine(2503) in 23S rRNA + 5'-deoxyadenosine + L-methionine + 2 oxidized [2Fe-2S]-[ferredoxin] + S-adenosyl-L-homocysteine. It carries out the reaction adenosine(37) in tRNA + 2 reduced [2Fe-2S]-[ferredoxin] + 2 S-adenosyl-L-methionine = 2-methyladenosine(37) in tRNA + 5'-deoxyadenosine + L-methionine + 2 oxidized [2Fe-2S]-[ferredoxin] + S-adenosyl-L-homocysteine. Functionally, specifically methylates position 2 of adenine 2503 in 23S rRNA and position 2 of adenine 37 in tRNAs. m2A2503 modification seems to play a crucial role in the proofreading step occurring at the peptidyl transferase center and thus would serve to optimize ribosomal fidelity. This Rhizorhabdus wittichii (strain DSM 6014 / CCUG 31198 / JCM 15750 / NBRC 105917 / EY 4224 / RW1) (Sphingomonas wittichii) protein is Dual-specificity RNA methyltransferase RlmN.